Here is a 218-residue protein sequence, read N- to C-terminus: Adenylate kinase (218 aa).

10–15 (GAGKGT) contacts ATP. The NMP stretch occupies residues 30 to 59 (STGDMLRAAIAKGTPLGLSAQKIMESGGLV). Residues Thr31, Arg36, 57–59 (GLV), 85–88 (GFPR), and Gln92 each bind AMP. Residues 122 to 159 (GRRIHQPSGRVYHVVNQPPKNPGVDDITGEPLIQRDDD) form an LID region. Residues Arg123 and 132 to 133 (VY) contribute to the ATP site. Residues Arg156 and Arg167 each coordinate AMP. Residue Gly203 coordinates ATP.

This sequence belongs to the adenylate kinase family. Monomer.

It is found in the cytoplasm. The enzyme catalyses AMP + ATP = 2 ADP. Its pathway is purine metabolism; AMP biosynthesis via salvage pathway; AMP from ADP: step 1/1. Catalyzes the reversible transfer of the terminal phosphate group between ATP and AMP. Plays an important role in cellular energy homeostasis and in adenine nucleotide metabolism. The polypeptide is Adenylate kinase (Legionella pneumophila (strain Lens)).